The following is a 312-amino-acid chain: DNA primase small subunit PriS (312 aa).

Active-site residues include Asp88, Asp90, and Asp215.

It belongs to the eukaryotic-type primase small subunit family. In terms of assembly, heterodimer of a small subunit (PriS) and a large subunit (PriL). Mg(2+) serves as cofactor. Mn(2+) is required as a cofactor.

Catalytic subunit of DNA primase, an RNA polymerase that catalyzes the synthesis of short RNA molecules used as primers for DNA polymerase during DNA replication. The small subunit contains the primase catalytic core and has DNA synthesis activity on its own. Binding to the large subunit stabilizes and modulates the activity, increasing the rate of DNA synthesis while decreasing the length of the DNA fragments, and conferring RNA synthesis capability. The DNA polymerase activity may enable DNA primase to also catalyze primer extension after primer synthesis. May also play a role in DNA repair. This chain is DNA primase small subunit PriS, found in Pyrobaculum islandicum (strain DSM 4184 / JCM 9189 / GEO3).